The sequence spans 297 residues: Putative S-adenosyl-L-methionine-dependent methyltransferase Mjls_1072 (297 aa).

S-adenosyl-L-methionine-binding positions include Asp-124 and 153–154; that span reads DL.

It belongs to the UPF0677 family.

Its function is as follows. Exhibits S-adenosyl-L-methionine-dependent methyltransferase activity. The polypeptide is Putative S-adenosyl-L-methionine-dependent methyltransferase Mjls_1072 (Mycobacterium sp. (strain JLS)).